Consider the following 555-residue polypeptide: Formate--tetrahydrofolate ligase (555 aa).

ATP is bound at residue 65–72 (TPAGEGKS).

It belongs to the formate--tetrahydrofolate ligase family.

It catalyses the reaction (6S)-5,6,7,8-tetrahydrofolate + formate + ATP = (6R)-10-formyltetrahydrofolate + ADP + phosphate. It participates in one-carbon metabolism; tetrahydrofolate interconversion. The protein is Formate--tetrahydrofolate ligase of Staphylococcus aureus (strain bovine RF122 / ET3-1).